Consider the following 465-residue polypeptide: Cysteine--tRNA ligase (465 aa).

Cysteine 27 provides a ligand contact to Zn(2+). The 'HIGH' region motif lies at 29-39 (PTVYNFFHIGN). Residues cysteine 207, histidine 232, and glutamate 236 each contribute to the Zn(2+) site. Positions 264–268 (KMSKS) match the 'KMSKS' region motif. An ATP-binding site is contributed by lysine 267.

Belongs to the class-I aminoacyl-tRNA synthetase family. In terms of assembly, monomer. Zn(2+) is required as a cofactor.

It localises to the cytoplasm. It carries out the reaction tRNA(Cys) + L-cysteine + ATP = L-cysteinyl-tRNA(Cys) + AMP + diphosphate. This chain is Cysteine--tRNA ligase, found in Clostridium botulinum (strain Langeland / NCTC 10281 / Type F).